Consider the following 93-residue polypeptide: CRISPR-associated endoribonuclease Cas2 1 (93 aa).

Mg(2+) is bound at residue Asp-8.

Belongs to the CRISPR-associated endoribonuclease Cas2 protein family. As to quaternary structure, homodimer, forms a heterotetramer with a Cas1 homodimer. The cofactor is Mg(2+).

Its function is as follows. CRISPR (clustered regularly interspaced short palindromic repeat), is an adaptive immune system that provides protection against mobile genetic elements (viruses, transposable elements and conjugative plasmids). CRISPR clusters contain sequences complementary to antecedent mobile elements and target invading nucleic acids. CRISPR clusters are transcribed and processed into CRISPR RNA (crRNA). Functions as a ssRNA-specific endoribonuclease. Involved in the integration of spacer DNA into the CRISPR cassette. The polypeptide is CRISPR-associated endoribonuclease Cas2 1 (Chloroflexus aurantiacus (strain ATCC 29366 / DSM 635 / J-10-fl)).